Here is a 357-residue protein sequence, read N- to C-terminus: U5 small nuclear ribonucleoprotein 40 kDa protein (357 aa).

A Glycyl lysine isopeptide (Lys-Gly) (interchain with G-Cter in SUMO2) cross-link involves residue Lys18. At Arg21 the chain carries Asymmetric dimethylarginine. 7 WD repeats span residues 64 to 103 (GHEGEVYCCKFHPNGSTLASAGFDRLILLWNVYGDCDNYA), 107 to 146 (GHSGAVMELHYNTDGSMLFSASTDKTVAVWDSETGERVKR), 149 to 189 (GHTS…AIQT), 191 to 230 (QNTYQVLAVTFNDTSDQIISGGIDNDIKVWDLRQNKLTYT), 233 to 272 (GHADSVTGLSLSSEGSYLLSNAMDNTVRVWDVRPFAPKER), 283 to 322 (NFEKNLLRCSWSPDGSKIAAGSADRFVYVWDTTSRRILYK), and 325 to 357 (GHAGSINEVAFHPDEPIIISASSDKRLYMGEIQ). Lys270 participates in a covalent cross-link: Glycyl lysine isopeptide (Lys-Gly) (interchain with G-Cter in SUMO2).

As to quaternary structure, component of the pre-catalytic and catalytic spliceosome complexes. Component of the postcatalytic spliceosome P complex. Part of the U5 snRNP complex. Interacts with PRPF8. Component of the U4/U6-U5 tri-snRNP complex composed of the U4, U6 and U5 snRNAs and at least PRPF3, PRPF4, PRPF6, PRPF8, PRPF31, SNRNP200, TXNL4A, WDR57, SNRNP40, DDX23, CD2BP2, PPIH, SNU13, EFTUD2, SART1 and USP39. Component of the minor spliceosome, which splices U12-type introns.

The protein resides in the nucleus. Its function is as follows. Required for pre-mRNA splicing as component of the activated spliceosome. Component of the U5 small nuclear ribonucleoprotein (snRNP) complex and the U4/U6-U5 tri-snRNP complex, building blocks of the spliceosome. As a component of the minor spliceosome, involved in the splicing of U12-type introns in pre-mRNAs. In Homo sapiens (Human), this protein is U5 small nuclear ribonucleoprotein 40 kDa protein (SNRNP40).